We begin with the raw amino-acid sequence, 639 residues long: ATP-dependent rRNA helicase spb4 (639 aa).

Residues 14-42 carry the Q motif motif; sequence WDAVTPPLSEWVLEAMSSMGFARMTPVQA. The region spanning 45 to 249 is the Helicase ATP-binding domain; that stretch reads IPLFMAHKDV…RVGLRNPVKI (205 aa). ATP is bound at residue 58-65; the sequence is AVTGSGKT. Positions 197-200 match the DEAD box motif; the sequence is DEAD. The region spanning 283-437 is the Helicase C-terminal domain; the sequence is ALKNILSSVQ…SISFSDADAT (155 aa). 2 disordered regions span residues 531 to 601 and 620 to 639; these read RKEL…ETKE and AAKA…KGFD. Residues 561–624 are a coiled coil; the sequence is QNAENKNKKL…RFRQAAAKAE (64 aa). The segment covering 577-601 has biased composition (basic and acidic residues); the sequence is KLKQEKTKWENMTEEERQKARETKE.

Belongs to the DEAD box helicase family. DDX55/SPB4 subfamily. In terms of assembly, component of pre-60S ribosomal complexes.

It is found in the nucleus. Its subcellular location is the nucleolus. The catalysed reaction is ATP + H2O = ADP + phosphate + H(+). ATP-binding RNA helicase involved in the biogenesis of 60S ribosomal subunits. Binds 90S pre-ribosomal particles and dissociates from pre-60S ribosomal particles after processing of 27SB pre-rRNA. Required for the normal formation of 18S rRNA through the processing of pre-rRNAs at sites A0, A1 and A2, and the normal formation of 25S and 5.8S rRNAs through the processing of pre-rRNAs at sites C1 and C2. The protein is ATP-dependent rRNA helicase spb4 of Aspergillus clavatus (strain ATCC 1007 / CBS 513.65 / DSM 816 / NCTC 3887 / NRRL 1 / QM 1276 / 107).